Consider the following 270-residue polypeptide: Putative pyruvate, phosphate dikinase regulatory protein (270 aa).

ADP is bound at residue Gly151 to Thr158.

It belongs to the pyruvate, phosphate/water dikinase regulatory protein family. PDRP subfamily.

The enzyme catalyses N(tele)-phospho-L-histidyl/L-threonyl-[pyruvate, phosphate dikinase] + ADP = N(tele)-phospho-L-histidyl/O-phospho-L-threonyl-[pyruvate, phosphate dikinase] + AMP + H(+). It carries out the reaction N(tele)-phospho-L-histidyl/O-phospho-L-threonyl-[pyruvate, phosphate dikinase] + phosphate + H(+) = N(tele)-phospho-L-histidyl/L-threonyl-[pyruvate, phosphate dikinase] + diphosphate. Its function is as follows. Bifunctional serine/threonine kinase and phosphorylase involved in the regulation of the pyruvate, phosphate dikinase (PPDK) by catalyzing its phosphorylation/dephosphorylation. The sequence is that of Putative pyruvate, phosphate dikinase regulatory protein (yqfL) from Bacillus subtilis (strain 168).